Consider the following 383-residue polypeptide: Acyl-CoA dehydrogenase, short-chain specific (383 aa).

Glu-367 serves as the catalytic Proton acceptor.

Belongs to the acyl-CoA dehydrogenase family. Homotetramer. Requires FAD as cofactor.

The enzyme catalyses butanoyl-CoA + oxidized [electron-transfer flavoprotein] + H(+) = (2E)-butenoyl-CoA + reduced [electron-transfer flavoprotein]. It carries out the reaction a short-chain 2,3-saturated fatty acyl-CoA + oxidized [electron-transfer flavoprotein] + H(+) = a short-chain (2E)-enoyl-CoA + reduced [electron-transfer flavoprotein]. Functionally, has an optimum specificity for 4-carbon length fatty acyl-CoAs. The sequence is that of Acyl-CoA dehydrogenase, short-chain specific from Megasphaera elsdenii.